A 168-amino-acid chain; its full sequence is Peroxynitrite isomerase (168 aa).

Residues glycine 25 to glycine 31 carry the GXWXGXG motif. A heme b-binding site is contributed by histidine 160.

This sequence belongs to the nitrobindin family. Homodimer. It depends on heme b as a cofactor.

The catalysed reaction is peroxynitrite = nitrate. It functions in the pathway nitrogen metabolism. Functionally, heme-binding protein able to scavenge peroxynitrite and to protect free L-tyrosine against peroxynitrite-mediated nitration, by acting as a peroxynitrite isomerase that converts peroxynitrite to nitrate. Therefore, this protein likely plays a role in peroxynitrite sensing and in the detoxification of reactive nitrogen and oxygen species (RNS and ROS, respectively). Is able to bind nitric oxide (NO) in vitro, but may act as a sensor of peroxynitrite levels in vivo. This Nocardia farcinica (strain IFM 10152) protein is Peroxynitrite isomerase.